The sequence spans 604 residues: Glutamine--fructose-6-phosphate aminotransferase [isomerizing] (604 aa).

C2 (nucleophile; for GATase activity) is an active-site residue. The Glutamine amidotransferase type-2 domain maps to 2–218 (CGIVGVVGNT…DKELVIVKKD (217 aa)). SIS domains follow at residues 284-423 (IIKS…ANGK) and 456-594 (VEQL…VDKP). K599 acts as the For Fru-6P isomerization activity in catalysis.

Homodimer.

It is found in the cytoplasm. The catalysed reaction is D-fructose 6-phosphate + L-glutamine = D-glucosamine 6-phosphate + L-glutamate. Functionally, catalyzes the first step in hexosamine metabolism, converting fructose-6P into glucosamine-6P using glutamine as a nitrogen source. The polypeptide is Glutamine--fructose-6-phosphate aminotransferase [isomerizing] (Streptococcus agalactiae serotype V (strain ATCC BAA-611 / 2603 V/R)).